The chain runs to 329 residues: Glycerol-3-phosphate dehydrogenase [NAD(P)+] (329 aa).

The NADPH site is built by Ser10, Trp11, Arg31, and Lys105. Sn-glycerol 3-phosphate-binding residues include Lys105, Gly134, and Ser136. NADPH is bound at residue Ala138. The sn-glycerol 3-phosphate site is built by Lys189, Asp242, Ser252, Arg253, and Asn254. The active-site Proton acceptor is the Lys189. Arg253 lines the NADPH pocket. NADPH contacts are provided by Val277 and Glu279.

The protein belongs to the NAD-dependent glycerol-3-phosphate dehydrogenase family.

It localises to the cytoplasm. It catalyses the reaction sn-glycerol 3-phosphate + NAD(+) = dihydroxyacetone phosphate + NADH + H(+). It carries out the reaction sn-glycerol 3-phosphate + NADP(+) = dihydroxyacetone phosphate + NADPH + H(+). Its pathway is membrane lipid metabolism; glycerophospholipid metabolism. Catalyzes the reduction of the glycolytic intermediate dihydroxyacetone phosphate (DHAP) to sn-glycerol 3-phosphate (G3P), the key precursor for phospholipid synthesis. The sequence is that of Glycerol-3-phosphate dehydrogenase [NAD(P)+] from Neisseria gonorrhoeae (strain ATCC 700825 / FA 1090).